Consider the following 188-residue polypeptide: Elongation factor P (188 aa).

An N6-(3,6-diaminohexanoyl)-5-hydroxylysine modification is found at Lys-34.

Belongs to the elongation factor P family. Post-translationally, may be beta-lysylated on the epsilon-amino group of Lys-34 by the combined action of EpmA and EpmB, and then hydroxylated on the C5 position of the same residue by EpmC (if this protein is present). Lysylation is critical for the stimulatory effect of EF-P on peptide-bond formation. The lysylation moiety may extend toward the peptidyltransferase center and stabilize the terminal 3-CCA end of the tRNA. Hydroxylation of the C5 position on Lys-34 may allow additional potential stabilizing hydrogen-bond interactions with the P-tRNA.

Its subcellular location is the cytoplasm. Its pathway is protein biosynthesis; polypeptide chain elongation. Its function is as follows. Involved in peptide bond synthesis. Alleviates ribosome stalling that occurs when 3 or more consecutive Pro residues or the sequence PPG is present in a protein, possibly by augmenting the peptidyl transferase activity of the ribosome. Modification of Lys-34 is required for alleviation. This is Elongation factor P from Enterobacter sp. (strain 638).